Here is a 597-residue protein sequence, read N- to C-terminus: Dynein intermediate chain 3, ciliary (597 aa).

WD repeat units lie at residues 159-210 (EIKR…KPEF), 213-253 (KPVS…QAVE), 260-301 (SHHD…EPTE), 314-354 (ENAQ…PPEK), 361-400 (EHIG…SSIM), 404-444 (YHMS…KDPT), and 449-488 (VSDD…CTMQ). 2 disordered regions span residues 512–546 (RQRE…VAAA) and 562–597 (AAQQ…EKEG). A compositionally biased stretch (acidic residues) spans 528–542 (QDDDEEGGPDEEEDL). Residues 584 to 597 (GSEKKDTENGEKEG) show a composition bias toward basic and acidic residues.

It belongs to the dynein intermediate chain family. Consists of at least two heavy chains (alpha and beta), three intermediate chains and several light chains.

Its subcellular location is the cytoplasm. The protein localises to the cytoskeleton. The protein resides in the cilium axoneme. In terms of biological role, may play a role in the regulation of dynein heavy chain activity. The sequence is that of Dynein intermediate chain 3, ciliary from Heliocidaris crassispina (Sea urchin).